A 257-amino-acid polypeptide reads, in one-letter code: 4-hydroxy-tetrahydrodipicolinate reductase (257 aa).

NAD(+) contacts are provided by residues 11–16 (GANGRM) and Glu37. Residue Arg38 coordinates NADP(+). Residues 86-88 (GST) and 110-113 (SGNY) each bind NAD(+). His144 (proton donor/acceptor) is an active-site residue. His145 serves as a coordination point for (S)-2,3,4,5-tetrahydrodipicolinate. Lys148 acts as the Proton donor in catalysis. A (S)-2,3,4,5-tetrahydrodipicolinate-binding site is contributed by 154–155 (GT).

It belongs to the DapB family.

It is found in the cytoplasm. It carries out the reaction (S)-2,3,4,5-tetrahydrodipicolinate + NAD(+) + H2O = (2S,4S)-4-hydroxy-2,3,4,5-tetrahydrodipicolinate + NADH + H(+). The enzyme catalyses (S)-2,3,4,5-tetrahydrodipicolinate + NADP(+) + H2O = (2S,4S)-4-hydroxy-2,3,4,5-tetrahydrodipicolinate + NADPH + H(+). The protein operates within amino-acid biosynthesis; L-lysine biosynthesis via DAP pathway; (S)-tetrahydrodipicolinate from L-aspartate: step 4/4. In terms of biological role, catalyzes the conversion of 4-hydroxy-tetrahydrodipicolinate (HTPA) to tetrahydrodipicolinate. This Caulobacter vibrioides (strain ATCC 19089 / CIP 103742 / CB 15) (Caulobacter crescentus) protein is 4-hydroxy-tetrahydrodipicolinate reductase.